We begin with the raw amino-acid sequence, 203 residues long: GTP-binding protein YPTC1 (203 aa).

Residues Gly-15–Cys-23, Tyr-33–Thr-40, Asp-63–Gln-67, Asn-121–Asp-124, and Ser-151–Lys-153 each bind GTP. An Effector region motif is present at residues Tyr-37 to Phe-45. Positions Ala-174–Cys-203 are disordered. 2 S-geranylgeranyl cysteine lipidation sites follow: Cys-202 and Cys-203.

It belongs to the small GTPase superfamily. Rab family.

It is found in the cell membrane. In terms of biological role, protein transport. Probably involved in vesicular traffic. The sequence is that of GTP-binding protein YPTC1 (YPTC1) from Chlamydomonas reinhardtii (Chlamydomonas smithii).